Consider the following 478-residue polypeptide: Uronate isomerase (478 aa).

The protein belongs to the metallo-dependent hydrolases superfamily. Uronate isomerase family.

It carries out the reaction D-glucuronate = D-fructuronate. It catalyses the reaction aldehydo-D-galacturonate = keto-D-tagaturonate. The protein operates within carbohydrate metabolism; pentose and glucuronate interconversion. The protein is Uronate isomerase of Bacillus pumilus (strain SAFR-032).